We begin with the raw amino-acid sequence, 72 residues long: Conotoxin 3 (72 aa).

An N-terminal signal peptide occupies residues 1 to 22 (MKLTCVVIVAVLLLTACQLITA). The propeptide occupies 23–46 (DDSRGTQEHRALRSDTKLSMLTLR). 3 disulfide bridges follow: cysteine 47/cysteine 61, cysteine 54/cysteine 64, and cysteine 60/cysteine 71.

It belongs to the conotoxin O1 superfamily. As to expression, expressed by the venom duct.

Its subcellular location is the secreted. The sequence is that of Conotoxin 3 from Conus striatus (Striated cone).